The chain runs to 317 residues: Protein PXR1 (317 aa).

The region spanning 25–79 (TTGYGHRIMSAQGWTPGAFLGAPGAAHSSCYTAASASHIRVVLKDDTLGLGARPR) is the G-patch domain. A disordered region spans residues 152–268 (EQANKDDSSD…PNKQSAQQST (117 aa)). The span at 154–170 (ANKDDSSDPKSRQETTQ) shows a compositional bias: basic and acidic residues. Basic residues predominate over residues 171–182 (KRPKKEKRKEKS). The segment covering 192–219 (RSISSKPERGTINSANQTSDDESTNIVP) has biased composition (polar residues). Basic residues predominate over residues 224 to 236 (SRKKEKKKKSKKR).

This sequence belongs to the PINX1 family.

It localises to the nucleus. The protein localises to the nucleolus. Involved in rRNA-processing at A0, A1 and A2 sites and negatively regulates telomerase. This is Protein PXR1 (PXR1) from Coccidioides immitis (strain RS) (Valley fever fungus).